The chain runs to 193 residues: NAD(P)H-quinone oxidoreductase subunit I (193 aa).

2 consecutive 4Fe-4S ferredoxin-type domains span residues 55-84 (GRIHFEFDKCIACEVCVRVCPINLPVVDWE) and 95-124 (KHYSIDFGVCIFCGNCVEYCPTNCLSMTEE). [4Fe-4S] cluster-binding residues include cysteine 64, cysteine 67, cysteine 70, cysteine 74, cysteine 104, cysteine 107, cysteine 110, and cysteine 114. Residues 169-193 (LDPHDLPSGNQRSGKRPEEIIAESD) form a disordered region.

It belongs to the complex I 23 kDa subunit family. As to quaternary structure, NDH-1 is composed of at least 11 different subunits. Requires [4Fe-4S] cluster as cofactor.

It localises to the cellular thylakoid membrane. The enzyme catalyses a plastoquinone + NADH + (n+1) H(+)(in) = a plastoquinol + NAD(+) + n H(+)(out). It carries out the reaction a plastoquinone + NADPH + (n+1) H(+)(in) = a plastoquinol + NADP(+) + n H(+)(out). Functionally, NDH-1 shuttles electrons from an unknown electron donor, via FMN and iron-sulfur (Fe-S) centers, to quinones in the respiratory and/or the photosynthetic chain. The immediate electron acceptor for the enzyme in this species is believed to be plastoquinone. Couples the redox reaction to proton translocation, and thus conserves the redox energy in a proton gradient. This chain is NAD(P)H-quinone oxidoreductase subunit I, found in Rippkaea orientalis (strain PCC 8801 / RF-1) (Cyanothece sp. (strain PCC 8801)).